A 1097-amino-acid polypeptide reads, in one-letter code: RE1-silencing transcription factor (1097 aa).

Residues 32-122 are interaction with SIN3A; that stretch reads DLHDLSKAEL…SLELSVVEPQ (91 aa). An interaction with SIN3B region spans residues 43-57; sequence APQLIMLANVALTGE. Disordered stretches follow at residues 83–103 and 127–159; these read NFSD…KGEP and ASGA…TKPF. Over residues 86–96 the composition is skewed to acidic residues; that stretch reads DSEEGEGLEES. Positions 145–418 are interaction with ZFP90; that stretch reads PGAEDKGKSS…KSKHPTCPNK (274 aa). The C2H2-type 1 zinc-finger motif lies at 159–181; it reads FRCKPCQYEAESEEQFVHHIRVH. The required for binding to the neuron-restrictive silencer element stretch occupies residues 201–212; sequence SGSSTAEEGDFS. 7 consecutive C2H2-type zinc fingers follow at residues 216–238, 248–270, 276–298, 304–326, 332–355, 361–383, and 389–412; these read IRCD…LKHH, YKCI…LRNH, YTCG…VRTH, YKCE…MRTH, FKCD…RQVH, LNCP…VELH, and FNCP…KSKH. The segment covering 452-479 has biased composition (basic and acidic residues); sequence KIKGDVAGKKNEKSVKAEKRDVSKEKKP. 4 disordered regions span residues 452 to 642, 774 to 837, 853 to 938, and 961 to 1049; these read KIKG…MEGA, KEPV…EQVL, ESVS…NGKH, and GINS…NAKE. The segment covering 480 to 490 has biased composition (polar residues); it reads SNNVSVIQVTT. Basic and acidic residues-rich tracts occupy residues 495-504 and 559-570; these read SVTEVKEMDV and PKGDSKVEENKK. A compositionally biased stretch (basic residues) spans 577–593; sequence KSTKKKTLKNKSSKKSS. Positions 803–836 are enriched in basic and acidic residues; that stretch reads PPLHMEPISKKPPLRKDKKEKSNMQSERARKEQV. The residue at position 864 (serine 864) is a Phosphoserine. The segment covering 913–930 has biased composition (polar residues); the sequence is INESTHISSSGQNLNTPE. Serine 971 carries the phosphoserine modification. Positions 1009 to 1087 are interaction with RCOR1; the sequence is EGIHSHEGSD…HLNRHLVNVY (79 aa). The C2H2-type 9 zinc-finger motif lies at 1060–1082; the sequence is FVCIFCDRSFRKGKDYSKHLNRH.

As to quaternary structure, isoform 1 and isoform 3 form heterodimers. Isoform 3: Forms homodimers and homooligomers; binds to the neuron-restrictive silencer element (NRSE) as monomer. Interacts with SIN3A, SIN3B and RCOR1. Interacts with CDYL. Interacts with EHMT1 and EHMT2 only in the presence of CDYL. Part of a complex containing at least CDYL, REST, WIZ, SETB1, EHMT1 and EHMT2. Interacts (via zinc-finger DNA-binding domain) with ZFP90 (via N- and C-termini); the interaction inhibits REST repressor activity. Interacts (via C2H2-type zinc finger 5) with PRICKLE1. Interacts with FBXW11 and BTRC. Interacts with USP7. O-glycosylated. Post-translationally, phosphorylated; phosphorylation is required for ubiquitination. In terms of processing, ubiquitinated; ubiquitination is mediated by BTRC and leads to proteasomal degradation in G2 phase. Ubiquitination increases during neuronal differentiation. Deubiquitinated by USP7; leading to its stabilization and promoting the maintenance of neural progenitor cells. Expressed in neurons of the prefrontal cortex, in hippocampal pyramidal neurons, dentate gyrus granule neurons and cerebellar Purkinje and granule neurons (at protein level). Expressed in dopaminergic neurons of the substantia nigra (at protein level). Expressed in neural progenitor cells (at protein level). In patients suffering from Alzheimer disease, frontotemporal dementia or dementia with Lewy bodies, decreased nuclear levels have been observed in neurons of the prefrontal cortex and the hippocampus, but not in neurons of the dentate gyrus and cerebellum (at protein level). In patients with Parkinson disease or dementia with Lewy bodies, decreased nuclear levels have been observed in dopaminergic neurons and in cortical neurons and localization to Lewy bodies and pale bodies was detected (at protein level). Expressed at higher levels in weakly invasive breast cancer cell lines and at lower levels in highly invasive breast cancer lines (at protein level). Ubiquitous. Expressed at higher levels in the tissues of the lymphocytic compartment, including spleen, thymus, peripheral blood lymphocytes and ovary.

Its subcellular location is the nucleus. It localises to the cytoplasm. Its function is as follows. Transcriptional repressor which binds neuron-restrictive silencer element (NRSE) and represses neuronal gene transcription in non-neuronal cells. Restricts the expression of neuronal genes by associating with two distinct corepressors, SIN3A and RCOR1, which in turn recruit histone deacetylase to the promoters of REST-regulated genes. Mediates repression by recruiting the BHC complex at RE1/NRSE sites which acts by deacetylating and demethylating specific sites on histones, thereby acting as a chromatin modifier. Transcriptional repression by REST-CDYL via the recruitment of histone methyltransferase EHMT2 may be important in transformation suppression. Represses the expression of SRRM4 in non-neural cells to prevent the activation of neural-specific splicing events and to prevent production of REST isoform 3. Repressor activity may be inhibited by forming heterodimers with isoform 3, thereby preventing binding to NRSE or binding to corepressors and leading to derepression of target genes. Also maintains repression of neuronal genes in neural stem cells, and allows transcription and differentiation into neurons by dissociation from RE1/NRSE sites of target genes. Thereby is involved in maintaining the quiescent state of adult neural stem cells and preventing premature differentiation into mature neurons. Plays a role in the developmental switch in synaptic NMDA receptor composition during postnatal development, by repressing GRIN2B expression and thereby altering NMDA receptor properties from containing primarily GRIN2B to primarily GRIN2A subunits. Acts as a regulator of osteoblast differentiation. Key repressor of gene expression in hypoxia; represses genes in hypoxia by direct binding to an RE1/NRSE site on their promoter regions. May also function in stress resistance in the brain during aging; possibly by regulating expression of genes involved in cell death and in the stress response. Repressor of gene expression in the hippocampus after ischemia by directly binding to RE1/NRSE sites and recruiting SIN3A and RCOR1 to promoters of target genes, thereby promoting changes in chromatin modifications and ischemia-induced cell death. After ischemia, might play a role in repression of miR-132 expression in hippocampal neurons, thereby leading to neuronal cell death. Negatively regulates the expression of SRRM3 in breast cancer cell lines. In terms of biological role, binds to the 3' region of the neuron-restrictive silencer element (NRSE), with lower affinity than full-length REST isoform 1. Exhibits weaker repressor activity compared to isoform 1. May negatively regulate the repressor activity of isoform 1 by binding to isoform 1, thereby preventing its binding to NRSE and leading to derepression of target genes. However, in another study, does not appear to be implicated in repressor activity of a NRSE motif-containing reporter construct nor in inhibitory activity on the isoform 1 transcriptional repressor activity. Post-transcriptional inactivation of REST by SRRM4-dependent alternative splicing into isoform 3 is required in mechanosensory hair cells in the inner ear for derepression of neuronal genes and hearing. This is RE1-silencing transcription factor (REST) from Homo sapiens (Human).